Reading from the N-terminus, the 124-residue chain is Small polypeptide ROTUNDIFOLIA LIKE 3 (124 aa).

The segment at 1–25 is disordered; the sequence is MEDERWKLSSSKGRSKSGRSCSSSS. Asparagine 35 and asparagine 38 each carry an N-linked (GlcNAc...) asparagine glycan. The helical transmembrane segment at 59-75 threads the bilayer; that stretch reads AWSAAGAGGGGASSSSS. The tract at residues 60–95 is disordered; sequence WSAAGAGGGGASSSSSSQHQHQQQQQQSNNSQRLSK. The span at 71 to 91 shows a compositional bias: low complexity; that stretch reads SSSSSSQHQHQQQQQQSNNSQ. A glycan (N-linked (GlcNAc...) asparagine) is linked at asparagine 88. Residues 92-124 form a required for DVL/RTFL small polypeptide activity region; that stretch reads RLSKKCVEAVKEHRARFYIVRRCVSMLVCWRDY.

This sequence belongs to the DVL/RTFL small polypeptides family.

The protein localises to the cell membrane. Its function is as follows. Small polypeptide acting as a regulatory molecule which coordinates cellular responses required for differentiation, growth and development, probably by restricting polar cell proliferation in lateral organs (e.g. leaves and petioles). This Oryza sativa subsp. indica (Rice) protein is Small polypeptide ROTUNDIFOLIA LIKE 3.